The primary structure comprises 436 residues: UDP-N-acetylmuramoylalanine--D-glutamate ligase (436 aa).

Position 112–118 (112–118 (GSNGKST)) interacts with ATP.

It belongs to the MurCDEF family.

Its subcellular location is the cytoplasm. It catalyses the reaction UDP-N-acetyl-alpha-D-muramoyl-L-alanine + D-glutamate + ATP = UDP-N-acetyl-alpha-D-muramoyl-L-alanyl-D-glutamate + ADP + phosphate + H(+). It functions in the pathway cell wall biogenesis; peptidoglycan biosynthesis. Cell wall formation. Catalyzes the addition of glutamate to the nucleotide precursor UDP-N-acetylmuramoyl-L-alanine (UMA). This Photorhabdus laumondii subsp. laumondii (strain DSM 15139 / CIP 105565 / TT01) (Photorhabdus luminescens subsp. laumondii) protein is UDP-N-acetylmuramoylalanine--D-glutamate ligase.